The primary structure comprises 64 residues: Large ribosomal subunit protein bL35 (64 aa).

Positions 1 to 10 (MPKMKTNSAA) are enriched in polar residues. Residues 1–64 (MPKMKTNSAA…AKKLHQLLQK (64 aa)) form a disordered region. The span at 54–64 (QAKKLHQLLQK) shows a compositional bias: basic residues.

This sequence belongs to the bacterial ribosomal protein bL35 family.

The chain is Large ribosomal subunit protein bL35 from Bifidobacterium longum (strain NCC 2705).